Consider the following 54-residue polypeptide: UPF0391 membrane protein Aave_3864 (54 aa).

2 helical membrane-spanning segments follow: residues 5 to 25 and 28 to 48; these read AVVF…GIAA and VGIA…TFVL.

This sequence belongs to the UPF0391 family.

It localises to the cell membrane. The chain is UPF0391 membrane protein Aave_3864 from Paracidovorax citrulli (strain AAC00-1) (Acidovorax citrulli).